A 313-amino-acid polypeptide reads, in one-letter code: tRNA-cytidine(32) 2-sulfurtransferase (313 aa).

Positions 46-51 match the PP-loop motif motif; sequence SGGKDS. Cysteine 121, cysteine 124, and cysteine 212 together coordinate [4Fe-4S] cluster.

This sequence belongs to the TtcA family. Homodimer. It depends on Mg(2+) as a cofactor. Requires [4Fe-4S] cluster as cofactor.

It is found in the cytoplasm. The catalysed reaction is cytidine(32) in tRNA + S-sulfanyl-L-cysteinyl-[cysteine desulfurase] + AH2 + ATP = 2-thiocytidine(32) in tRNA + L-cysteinyl-[cysteine desulfurase] + A + AMP + diphosphate + H(+). It functions in the pathway tRNA modification. Its function is as follows. Catalyzes the ATP-dependent 2-thiolation of cytidine in position 32 of tRNA, to form 2-thiocytidine (s(2)C32). The sulfur atoms are provided by the cysteine/cysteine desulfurase (IscS) system. The sequence is that of tRNA-cytidine(32) 2-sulfurtransferase from Nitrosomonas eutropha (strain DSM 101675 / C91 / Nm57).